The primary structure comprises 911 residues: Viral IRF4-like protein (911 aa).

A DNA-binding region (IRF tryptophan pentad repeat) is located at residues 7 to 114 (SEWATLWIID…GSYVVWQLVR (108 aa)). 4 disordered regions span residues 147–184 (TTAT…PRKS), 211–302 (ASTS…SRLP), 494–537 (GGAP…PYVC), and 681–727 (ELQE…FFDP). The span at 211 to 221 (ASTSGMGSSGT) shows a compositional bias: low complexity. Composition is skewed to polar residues over residues 222–231 (RQVTQASSFT) and 495–505 (GAPNQGLSHTQ). Basic residues predominate over residues 697-710 (RRPRSRSPHGRRTP).

It belongs to the IRF family. Interacts with host MDM2; this interaction facilitates the proteasomal degradation of TP53/p53. Interacts with host IRF7; this interaction prevents IRF7 dimerization and subsequent activation.

The protein localises to the host nucleus. Functionally, plays a role in host cell apoptosis modulation by promoting TP53/p53 ubiquitination and subsequent degradation and thus down-regulating TP53/p53-mediated apoptosis. Works as a potential viral transcription factor to modulate host gene expression to build favorable environments for the viral lytic life cycle and greatly accelerates the induction of an immediate early gene RTA, early genes ORF36 and ORF57, late genes ORF25 and ORF64, and latent genes LANA1 and v-IRF3. Inhibits host interferon-alpha production by interacting with host IRF7 and preventing IRF7 dimerization. The polypeptide is Viral IRF4-like protein (vIRF-4) (Homo sapiens (Human)).